We begin with the raw amino-acid sequence, 300 residues long: Tumor necrosis factor receptor superfamily member 6B (300 aa).

A signal peptide spans 1–29; sequence MRALEGPGLSLLCLVLALPALLPVPAVRG. TNFR-Cys repeat units follow at residues 31-70, 72-113, 115-150, and 152-193; these read AETP…PTTC, PCPP…NRAC, CRTG…NTQC, and PCPP…DTLC. 8 cysteine pairs are disulfide-bonded: cysteine 49/cysteine 62, cysteine 52/cysteine 70, cysteine 73/cysteine 88, cysteine 91/cysteine 105, cysteine 95/cysteine 113, cysteine 115/cysteine 126, cysteine 132/cysteine 150, and cysteine 153/cysteine 168. N-linked (GlcNAc...) asparagine glycosylation is present at asparagine 173. An intrachain disulfide couples cysteine 174 to cysteine 193.

As to expression, detected in fetal lung, brain and liver. Detected in adult stomach, spinal cord, lymph node, trachea, spleen, colon and lung. Highly expressed in several primary tumors from colon, stomach, rectum, esophagus and in SW480 colon carcinoma cells.

It is found in the secreted. Functionally, decoy receptor that can neutralize the cytotoxic ligands TNFS14/LIGHT, TNFSF15 and TNFSF6/FASL. Protects against apoptosis. This Homo sapiens (Human) protein is Tumor necrosis factor receptor superfamily member 6B (TNFRSF6B).